Here is a 107-residue protein sequence, read N- to C-terminus: MAWTYIMRQSDLPPGEMQRHEGGPEPVMVCNVDGEFFAVQDTCTHGNWALSDGYLDGGVVECTLHFGKFCVRTGKVKALPACKPIKVFPIKVEGGDVHVDLDAGEVK.

One can recognise a Rieske domain in the interval 4–99 (TYIMRQSDLP…IKVEGGDVHV (96 aa)). The [2Fe-2S] cluster site is built by cysteine 43, histidine 45, cysteine 62, and histidine 65.

This sequence belongs to the bacterial ring-hydroxylating dioxygenase ferredoxin component family. As to quaternary structure, this dioxygenase system consists of four proteins: the two subunits of the oxygenase component (TecA1 and TecA2), a ferredoxin (TecA3) and a ferredoxin reductase (TecA4). It depends on [2Fe-2S] cluster as a cofactor.

It functions in the pathway aromatic compound metabolism. Part of the chlorobenzene dioxygenase system that catalyzes the dihydroxylation of a range of aromatic compounds, including chlorinated benzenes and toluenes, and dinuclear aromatics such as biphenyl and dibenzo-p-dioxin. The protein is Chlorobenzene dioxygenase, ferredoxin component of Cupriavidus sp. (strain PS12).